The sequence spans 427 residues: Histidine--tRNA ligase (427 aa).

It belongs to the class-II aminoacyl-tRNA synthetase family. As to quaternary structure, homodimer.

It is found in the cytoplasm. It catalyses the reaction tRNA(His) + L-histidine + ATP = L-histidyl-tRNA(His) + AMP + diphosphate + H(+). The chain is Histidine--tRNA ligase from Mannheimia succiniciproducens (strain KCTC 0769BP / MBEL55E).